The primary structure comprises 432 residues: Glutamate-1-semialdehyde 2,1-aminomutase (432 aa).

An N6-(pyridoxal phosphate)lysine modification is found at Lys265.

This sequence belongs to the class-III pyridoxal-phosphate-dependent aminotransferase family. HemL subfamily. In terms of assembly, homodimer. The cofactor is pyridoxal 5'-phosphate.

The protein resides in the cytoplasm. It catalyses the reaction (S)-4-amino-5-oxopentanoate = 5-aminolevulinate. Its pathway is porphyrin-containing compound metabolism; protoporphyrin-IX biosynthesis; 5-aminolevulinate from L-glutamyl-tRNA(Glu): step 2/2. This Vibrio cholerae serotype O1 (strain ATCC 39541 / Classical Ogawa 395 / O395) protein is Glutamate-1-semialdehyde 2,1-aminomutase.